The primary structure comprises 229 residues: MTPKLIVALDFDNQDNALQLVEKLDPNHCALKVGSELFTLLGPQFVKELVRREFKVFLDLKFHDIPNTVAKACYSAAELGVWMINVHAIGGLKMLQAARESLKTYGKDRPLLIAVTVLTSFEEGELASVGIRNTLPEQATHLAMLAREAGLDGVVSSAHEVKIIKQKCGENFITVTPGIRLPNNLKDDQSRVMTPQQAIREGSDFLVIGRPITQASNPYEVVSALLRDL.

Residues aspartate 10, lysine 32, 59 to 68 (DLKFHDIPNT), threonine 119, arginine 180, glutamine 189, glycine 209, and arginine 210 each bind substrate. The active-site Proton donor is lysine 61.

Belongs to the OMP decarboxylase family. Type 1 subfamily. In terms of assembly, homodimer.

The enzyme catalyses orotidine 5'-phosphate + H(+) = UMP + CO2. The protein operates within pyrimidine metabolism; UMP biosynthesis via de novo pathway; UMP from orotate: step 2/2. In terms of biological role, catalyzes the decarboxylation of orotidine 5'-monophosphate (OMP) to uridine 5'-monophosphate (UMP). The sequence is that of Orotidine 5'-phosphate decarboxylase from Legionella pneumophila (strain Lens).